The primary structure comprises 521 residues: 4-cresol dehydrogenase [hydroxylating] flavoprotein subunit (521 aa).

The 215-residue stretch at 54–268 folds into the FAD-binding PCMH-type domain; sequence AAHAPSAAVT…VEIVDALRPL (215 aa). Y384 carries the O-8alpha-FAD tyrosine modification.

In terms of assembly, tetramer of two cytochrome subunits and two flavoprotein subunits. FAD serves as cofactor.

The enzyme catalyses 4-methylphenol + 4 oxidized [azurin] + H2O = 4 reduced [azurin] + 4-hydroxybenzaldehyde + 4 H(+). It functions in the pathway aromatic compound metabolism; p-cresol degradation. Catalyzes the azurin dependent hydroxylation of the methyl group of 4-methylphenol to form 4-hydroxybenzaldehyde. In Pseudomonas putida (Arthrobacter siderocapsulatus), this protein is 4-cresol dehydrogenase [hydroxylating] flavoprotein subunit (pchF).